Consider the following 49-residue polypeptide: Large ribosomal subunit protein bL33A (49 aa).

The tract at residues 21–49 (KNKRNNPERVEMKKYCSRDNKHTLHRETK) is disordered. The span at 25 to 49 (NNPERVEMKKYCSRDNKHTLHRETK) shows a compositional bias: basic and acidic residues.

It belongs to the bacterial ribosomal protein bL33 family.

The sequence is that of Large ribosomal subunit protein bL33A from Staphylococcus epidermidis (strain ATCC 35984 / DSM 28319 / BCRC 17069 / CCUG 31568 / BM 3577 / RP62A).